Here is a 477-residue protein sequence, read N- to C-terminus: Bifunctional enzyme PyrF/PyrE (477 aa).

An OMP decarboxylase region spans residues 1–273; that stretch reads MIFFDKLHQN…ITVRDVASCS (273 aa). Catalysis depends on Lys96, which acts as the Proton donor. Residues 274–477 form an orotate phosphoribosyltransferase region; sequence VWLPDVFTVK…DEQFLALTAE (204 aa). 5-phospho-alpha-D-ribose 1-diphosphate contacts are provided by residues Arg374, Lys375, Lys378, His380, and 400-408; that span reads DDILISGKS.

In the N-terminal section; belongs to the OMP decarboxylase family. Type 2 subfamily. This sequence in the C-terminal section; belongs to the purine/pyrimidine phosphoribosyltransferase family. It depends on Mg(2+) as a cofactor.

It carries out the reaction orotidine 5'-phosphate + H(+) = UMP + CO2. It catalyses the reaction orotidine 5'-phosphate + diphosphate = orotate + 5-phospho-alpha-D-ribose 1-diphosphate. It functions in the pathway pyrimidine metabolism; UMP biosynthesis via de novo pathway; UMP from orotate: step 1/2. The protein operates within pyrimidine metabolism; UMP biosynthesis via de novo pathway; UMP from orotate: step 2/2. In terms of biological role, catalyzes the transfer of a ribosyl phosphate group from 5-phosphoribose 1-diphosphate to orotate, leading to the formation of orotidine monophosphate (OMP). Catalyzes the decarboxylation of orotidine monophosphate (OMP) to uridine monophosphate (UMP). The polypeptide is Bifunctional enzyme PyrF/PyrE (pyrFE) (Nostoc sp. (strain PCC 7120 / SAG 25.82 / UTEX 2576)).